The primary structure comprises 330 residues: Ketol-acid reductoisomerase (NADP(+)) (330 aa).

Positions 2-182 (ARLYYDTDAN…GGTRAGILET (181 aa)) constitute a KARI N-terminal Rossmann domain. Residues 25–28 (YGSQ), serine 51, serine 53, and 83–86 (DEVQ) contribute to the NADP(+) site. Residue histidine 108 is part of the active site. Glycine 134 is an NADP(+) binding site. In terms of domain architecture, KARI C-terminal knotted spans 183–328 (TFREETETDL…RELRAMFSWL (146 aa)). The Mg(2+) site is built by aspartate 191, glutamate 195, glutamate 227, and glutamate 231. A substrate-binding site is contributed by serine 252.

This sequence belongs to the ketol-acid reductoisomerase family. Requires Mg(2+) as cofactor.

The catalysed reaction is (2R)-2,3-dihydroxy-3-methylbutanoate + NADP(+) = (2S)-2-acetolactate + NADPH + H(+). It catalyses the reaction (2R,3R)-2,3-dihydroxy-3-methylpentanoate + NADP(+) = (S)-2-ethyl-2-hydroxy-3-oxobutanoate + NADPH + H(+). It functions in the pathway amino-acid biosynthesis; L-isoleucine biosynthesis; L-isoleucine from 2-oxobutanoate: step 2/4. It participates in amino-acid biosynthesis; L-valine biosynthesis; L-valine from pyruvate: step 2/4. Functionally, involved in the biosynthesis of branched-chain amino acids (BCAA). Catalyzes an alkyl-migration followed by a ketol-acid reduction of (S)-2-acetolactate (S2AL) to yield (R)-2,3-dihydroxy-isovalerate. In the isomerase reaction, S2AL is rearranged via a Mg-dependent methyl migration to produce 3-hydroxy-3-methyl-2-ketobutyrate (HMKB). In the reductase reaction, this 2-ketoacid undergoes a metal-dependent reduction by NADPH to yield (R)-2,3-dihydroxy-isovalerate. This is Ketol-acid reductoisomerase (NADP(+)) from Synechococcus sp. (strain JA-2-3B'a(2-13)) (Cyanobacteria bacterium Yellowstone B-Prime).